Here is a 575-residue protein sequence, read N- to C-terminus: FAD-linked oxidoreductase asqF (575 aa).

An N-terminal signal peptide occupies residues 1–23 (MALFRLSAAIVVIFLYIWSPSQR). Residues Asn45 and Asn80 are each glycosylated (N-linked (GlcNAc...) asparagine). In terms of domain architecture, FAD-binding PCMH-type spans 118–306 (NQGRIPLYAA…VRVTMRTYPD (189 aa)). His156 carries the pros-8alpha-FAD histidine modification. Residue Asn370 is glycosylated (N-linked (GlcNAc...) asparagine).

The protein belongs to the oxygen-dependent FAD-linked oxidoreductase family. It depends on FAD as a cofactor.

It carries out the reaction peniprequinolone + A = yaequinolone E + AH2. It participates in secondary metabolite biosynthesis. Its pathway is alkaloid biosynthesis. The protein operates within mycotoxin biosynthesis. Functionally, FAD-linked oxidoreductase; part of the gene cluster that mediates the biosynthesis of the aspoquinolone mycotoxins. Within the pathway, asqF performs FAD-dependent dehydrogenation of the dimethylallyl quinolone peniprequinolone to yield the conjugated aryl diene yaequinolone E. The first step of the pathway is catalyzed by the nonribosomal peptide synthetase asqK that condenses anthranilic acid and O-methyl-L-tyrosine to produce 4'-methoxycyclopeptin. 4'-methoxycyclopeptin is then converted to 4'-methoxydehydrocyclopeptin by the ketoglutarate-dependent dioxygenase asqJ. AsqJ also converts its first product 4'-methoxydehydrocyclopeptin to 4'-methoxycyclopenin. The following conversion of 4'-methoxycyclopenin into 4'-methoxyviridicatin is catalyzed by the cyclopenase asqI. 4'-methoxyviridicatin is the precursor of quinolone natural products, and is further converted to quinolinone B. The prenyltransferase asqH1 then catalyzes the canonical Friedel-Crafts alkylation of quinolinone B with dimethylallyl cation to yield dimethylallyl quinolone, which is subjected to FAD-dependent dehydrogenation by the FAD-linked oxidoreductase asqF to yield conjugated aryl diene. The delta(3') double bond then serves as the site of the second alkylation with DMAPP catalyzed by the prenyltransferase asqH2 to yield a carbenium ion intermediate, which can be attacked by H(2)O to yield a styrenyl quinolone containing a C3'-hydroxyprenyl chain. The FAD-dependent monooxygenase asqG performs epoxidation of the terminal C7'-C8' olefin. Finally, after dehydratation of the epoxide at C3 by asqC, the quinolone epoxide rearrangement protein asqO catalyzes an enzymatic 3-exo-tet cyclization to yield the cyclopropyl-THF ring system in aspoquinolone. In Emericella nidulans (strain FGSC A4 / ATCC 38163 / CBS 112.46 / NRRL 194 / M139) (Aspergillus nidulans), this protein is FAD-linked oxidoreductase asqF.